Consider the following 135-residue polypeptide: Ribosome-binding factor A (135 aa).

Belongs to the RbfA family. Monomer. Binds 30S ribosomal subunits, but not 50S ribosomal subunits or 70S ribosomes.

It is found in the cytoplasm. Its function is as follows. One of several proteins that assist in the late maturation steps of the functional core of the 30S ribosomal subunit. Associates with free 30S ribosomal subunits (but not with 30S subunits that are part of 70S ribosomes or polysomes). Required for efficient processing of 16S rRNA. May interact with the 5'-terminal helix region of 16S rRNA. The protein is Ribosome-binding factor A of Bartonella henselae (strain ATCC 49882 / DSM 28221 / CCUG 30454 / Houston 1) (Rochalimaea henselae).